A 270-amino-acid polypeptide reads, in one-letter code: Tryptophan synthase alpha chain (270 aa).

Catalysis depends on proton acceptor residues glutamate 49 and aspartate 60.

This sequence belongs to the TrpA family. As to quaternary structure, tetramer of two alpha and two beta chains.

The catalysed reaction is (1S,2R)-1-C-(indol-3-yl)glycerol 3-phosphate + L-serine = D-glyceraldehyde 3-phosphate + L-tryptophan + H2O. It participates in amino-acid biosynthesis; L-tryptophan biosynthesis; L-tryptophan from chorismate: step 5/5. Functionally, the alpha subunit is responsible for the aldol cleavage of indoleglycerol phosphate to indole and glyceraldehyde 3-phosphate. This Pseudomonas fluorescens (strain ATCC BAA-477 / NRRL B-23932 / Pf-5) protein is Tryptophan synthase alpha chain.